Here is a 272-residue protein sequence, read N- to C-terminus: Proteasome subunit beta type-5 (272 aa).

The propeptide at 1-62 is removed in mature form; sequence MINIDFDNIE…APKALEFAHG (62 aa). Residue Thr63 is the Nucleophile of the active site.

This sequence belongs to the peptidase T1B family. As to quaternary structure, the 26S proteasome consists of a 20S proteasome core and two 19S regulatory subunits. The 20S proteasome core is composed of 28 subunits that are arranged in four stacked rings, resulting in a barrel-shaped structure. The two end rings are each formed by seven alpha subunits, and the two central rings are each formed by seven beta subunits. The catalytic chamber with the active sites is on the inside of the barrel.

The protein localises to the cytoplasm. It is found in the nucleus. It catalyses the reaction Cleavage of peptide bonds with very broad specificity.. In terms of biological role, the proteasome is a multicatalytic proteinase complex which is characterized by its ability to cleave peptides with Arg, Phe, Tyr, Leu, and Glu adjacent to the leaving group at neutral or slightly basic pH. The proteasome has an ATP-dependent proteolytic activity. In Dictyostelium discoideum (Social amoeba), this protein is Proteasome subunit beta type-5 (psmB5).